We begin with the raw amino-acid sequence, 105 residues long: Phosphoribosyl-AMP cyclohydrolase (105 aa).

A Mg(2+)-binding site is contributed by Asp-72. Cys-73 contributes to the Zn(2+) binding site. Positions 74 and 76 each coordinate Mg(2+). Zn(2+)-binding residues include Cys-89 and Cys-96.

Belongs to the PRA-CH family. As to quaternary structure, homodimer. Mg(2+) serves as cofactor. Requires Zn(2+) as cofactor.

The protein localises to the cytoplasm. It carries out the reaction 1-(5-phospho-beta-D-ribosyl)-5'-AMP + H2O = 1-(5-phospho-beta-D-ribosyl)-5-[(5-phospho-beta-D-ribosylamino)methylideneamino]imidazole-4-carboxamide. It functions in the pathway amino-acid biosynthesis; L-histidine biosynthesis; L-histidine from 5-phospho-alpha-D-ribose 1-diphosphate: step 3/9. Its function is as follows. Catalyzes the hydrolysis of the adenine ring of phosphoribosyl-AMP. In Listeria monocytogenes serotype 4b (strain CLIP80459), this protein is Phosphoribosyl-AMP cyclohydrolase.